A 197-amino-acid polypeptide reads, in one-letter code: Gastrula zinc finger protein XlCGF17.1 (197 aa).

7 consecutive C2H2-type zinc fingers follow at residues 6 to 28, 34 to 56, 62 to 84, 90 to 112, 118 to 140, 146 to 169, and 175 to 197; these read ISCSECGKCFIKSSELTVHQMTH, YSCSECGKCFASLSHLRVHQKIH, FSCSECGKCFLNRGSLVRHHRTH, FFCSECGKRFAASSDLRVHRRTH, FSCSECEKRFLNPWSLVRHYRTH, FSCSECGKCFARSSDLTVHRRRSH, and FSCSECGKCFTSSSELTVHLRTH.

The protein belongs to the krueppel C2H2-type zinc-finger protein family.

It is found in the nucleus. In terms of biological role, may be involved in transcriptional regulation. In Xenopus laevis (African clawed frog), this protein is Gastrula zinc finger protein XlCGF17.1.